The following is a 757-amino-acid chain: Filensin (757 aa).

Residues 1-39 (MYRRSYVFQTRKEQYERAEEAPRAAEPDRLAEARAAAPN) are head. S5 carries the phosphoserine modification. Residues 39 to 319 (NLAALQGLGE…RIIENEGNRL (281 aa)) form the IF rod domain. A coil 1A region spans residues 40–74 (LAALQGLGERVAAHVQRARALEQRHAVLRRQLDAF). At A41 the chain carries N-acetylalanine. The interval 75–83 (QRLDELAGP) is linker 1. A coil 1B region spans residues 84 to 183 (EDALARHVEG…RYKKNLLEIQ (100 aa)). The segment at 184 to 200 (TYVTILQQIIQTTPQAA) is linker 12. Residues 201–319 (AITSGMREEK…RIIENEGNRL (119 aa)) are coil 2. The interval 320-756 (SSAFIETPIT…KKLGEKGSSS (437 aa)) is tail. A phosphoserine mark is found at S340 and S419. Disordered stretches follow at residues 406-436 (EGES…GGKI) and 493-705 (GVVV…PPRK). G433 carries the N-myristoyl glycine lipid modification. The segment covering 493–512 (GVVVSKGDDSVPPDSGVEPS) has biased composition (low complexity). Position 512 is a phosphoserine (S512). Residues 528 to 658 (QEKEDGLKEE…KQDDQKEEGA (131 aa)) show a composition bias toward basic and acidic residues. Repeat unit 1 spans residues 532–545 (DGLKEEGGPPEGKG). Residues 532-622 (DGLKEEGGPP…EEEGPLQKKE (91 aa)) are 7 X 14 AA tandem repeats. The 2; truncated repeat unit spans residues 546 to 552 (EPPEGKG). 5 consecutive repeat copies span residues 553–566 (DSVK…EGKG), 567–580 (DGVK…EGKG), 581–594 (DGVK…EGKG), 595–608 (DGVK…EGKG), and 609–622 (EGLK…QKKE). T628 and T674 each carry phosphothreonine. Phosphoserine is present on residues S701, S754, and S755.

It belongs to the intermediate filament family. Part of a complex required for lens intermediate filament formation composed of BFSP1, BFSP2 and CRYAA. Identified in a complex that contains VIM, EZR, AHNAK, BFSP1, BFSP2, ANK2, PLEC, PRX and spectrin. Found in a complex composed of PPL (via C-terminal linker domain), BFSP1 and BFSP2 in the retinal lens. Within the complex interacts with BFSP2. Interacts (via C-terminus) with MIP (via C-terminus) in aged lens fiber cells. Post-translationally, proteolytically cleaved during lens cell fiber differentiation with increased fragmentation as fiber cell age increases. Myristoylated at Gly-433 following proteolytic cleavage at Asp-432. In terms of processing, acetylated at Ala-41 following proteolytic cleavage at Leu-40. As to expression, abundantly expressed in both the inner and outer cortex of the retina, expressed at a lower level in the nucleus of the retina (at protein level). Detected in eye lens fiber cells (at protein level).

The protein resides in the cell membrane. Its subcellular location is the cytoplasm. The protein localises to the cytoskeleton. It is found in the cell cortex. Functionally, required for the correct formation of lens intermediate filaments as part of a complex composed of BFSP1, BFSP2 and CRYAA. Involved in altering the calcium regulation of MIP water permeability. The chain is Filensin (BFSP1) from Bos taurus (Bovine).